The following is a 330-amino-acid chain: Anthranilate phosphoribosyltransferase (330 aa).

Residues Gly75, 78–79 (GD), Thr83, 85–88 (NVST), 103–111 (KHGNRAASS), and Ala115 contribute to the 5-phospho-alpha-D-ribose 1-diphosphate site. Gly75 lines the anthranilate pocket. Ser87 contributes to the Mg(2+) binding site. Asn106 is an anthranilate binding site. Arg161 lines the anthranilate pocket. Asp220 and Glu221 together coordinate Mg(2+).

It belongs to the anthranilate phosphoribosyltransferase family. In terms of assembly, homodimer. Mg(2+) serves as cofactor.

It catalyses the reaction N-(5-phospho-beta-D-ribosyl)anthranilate + diphosphate = 5-phospho-alpha-D-ribose 1-diphosphate + anthranilate. It participates in amino-acid biosynthesis; L-tryptophan biosynthesis; L-tryptophan from chorismate: step 2/5. Its function is as follows. Catalyzes the transfer of the phosphoribosyl group of 5-phosphorylribose-1-pyrophosphate (PRPP) to anthranilate to yield N-(5'-phosphoribosyl)-anthranilate (PRA). This Erythrobacter litoralis (strain HTCC2594) protein is Anthranilate phosphoribosyltransferase.